We begin with the raw amino-acid sequence, 394 residues long: Acid ceramidase (394 aa).

Residues 1 to 20 (MLGRSLLTWVLAAAVTCAQA) form the signal peptide. C30 and C339 are oxidised to a cystine. The active-site Nucleophile is the C142. N-linked (GlcNAc...) asparagine glycosylation is found at N194, N258, N285, and N341. C387 and C391 form a disulfide bridge.

Belongs to the acid ceramidase family. Heterodimer; disulfide-linked. The heterodimer is composed of the disulfide-linked alpha and beta chains produced by autocatalytic cleavage of the precursor. In terms of processing, N-glycosylated. Proteolytically cleaved into two chains alpha and beta that remain associated via a disulfide bond. Cleavage gives rise to a conformation change that activates the enzyme. The same catalytic Cys residue mediates the autoproteolytic cleavage and subsequent hydrolysis of lipid substrates. The beta chain may undergo an additional C-terminal processing.

Its subcellular location is the lysosome. The protein resides in the secreted. The catalysed reaction is an N-acylsphing-4-enine + H2O = sphing-4-enine + a fatty acid. It carries out the reaction N-dodecanoylsphing-4-enine + H2O = dodecanoate + sphing-4-enine. It catalyses the reaction N-tetradecanoylsphing-4-enine + H2O = tetradecanoate + sphing-4-enine. The enzyme catalyses N-hexadecanoylsphing-4-enine + H2O = sphing-4-enine + hexadecanoate. The catalysed reaction is N-octadecanoylsphing-4-enine + H2O = sphing-4-enine + octadecanoate. It carries out the reaction N-dodecanoyl-(4R)-hydroxysphinganine + H2O = (4R)-hydroxysphinganine + dodecanoate. It catalyses the reaction N-(dodecanoyl)-sphinganine + H2O = dodecanoate + sphinganine. The enzyme catalyses N-(acetyl)-sphing-4-enine + H2O = sphing-4-enine + acetate. The catalysed reaction is N-(hexanoyl)sphing-4-enine + H2O = hexanoate + sphing-4-enine. It carries out the reaction N-octanoylsphing-4-enine + H2O = octanoate + sphing-4-enine. It catalyses the reaction N-(9Z-octadecenoyl)-sphing-4-enine + H2O = sphing-4-enine + (9Z)-octadecenoate. The enzyme catalyses N-dodecanoylethanolamine + H2O = dodecanoate + ethanolamine. Its pathway is lipid metabolism; sphingolipid metabolism. Its function is as follows. Lysosomal ceramidase that hydrolyzes sphingolipid ceramides into sphingosine and free fatty acids at acidic pH. Ceramides, sphingosine, and its phosphorylated form sphingosine-1-phosphate are bioactive lipids that mediate cellular signaling pathways regulating several biological processes including cell proliferation, apoptosis and differentiation. Has a higher catalytic efficiency towards C12-ceramides versus other ceramides. Also catalyzes the reverse reaction allowing the synthesis of ceramides from fatty acids and sphingosine. For the reverse synthetic reaction, the natural sphingosine D-erythro isomer is more efficiently utilized as a substrate compared to D-erythro-dihydrosphingosine and D-erythro-phytosphingosine, while the fatty acids with chain lengths of 12 or 14 carbons are the most efficiently used. Also has an N-acylethanolamine hydrolase activity. By regulating the levels of ceramides, sphingosine and sphingosine-1-phosphate in the epidermis, mediates the calcium-induced differentiation of epidermal keratinocytes. Also indirectly regulates tumor necrosis factor/TNF-induced apoptosis. By regulating the intracellular balance between ceramides and sphingosine, in adrenocortical cells, probably also acts as a regulator of steroidogenesis. The protein is Acid ceramidase of Rattus norvegicus (Rat).